Reading from the N-terminus, the 557-residue chain is Calcium-dependent protein kinase 4 (557 aa).

Residues 1-72 (MGNTCRGSIG…LVSPRKASMN (72 aa)) form a disordered region. Gly-2 carries the N-myristoyl glycine lipid modification. Positions 15 to 27 (QGYTQPEDSSCST) are enriched in polar residues. The segment covering 28 to 48 (NHNPSSGNSYSSSDNFSPTSN) has biased composition (low complexity). In terms of domain architecture, Protein kinase spans 94-352 (YTLGRKLGQG…AHEVLCHPWI (259 aa)). ATP-binding positions include 100–108 (LGQGQFGTT) and Lys-123. Asp-218 serves as the catalytic Proton acceptor. An autoinhibitory domain region spans residues 358 to 388 (APDRALDPAVLSRLKQFSAMNKLKKMALRVI). EF-hand domains follow at residues 395–430 (EEIAGLREMFKAMDTDSSGAITFDELKAGLRKYGST), 431–466 (LKDTEIRELMDAADVDNSGTIDYGEFIAATVHLNKL), 467–502 (EREEHLMAAFQYFDKDGSGYITVDEVQQACIEHNMT), and 506–536 (FEDIIREVDQDNDGRIDYGEFVAMMQKGNPC). Residues Asp-408, Asp-410, Ser-412, Glu-419, Asp-444, Asp-446, Ser-448, Thr-450, Glu-455, Asp-480, Asp-482, Ser-484, Tyr-486, Glu-491, Asp-514, Asp-516, Asp-518, Arg-520, and Glu-525 each contribute to the Ca(2+) site.

The protein belongs to the protein kinase superfamily. Ser/Thr protein kinase family. CDPK subfamily.

The protein localises to the membrane. It catalyses the reaction L-seryl-[protein] + ATP = O-phospho-L-seryl-[protein] + ADP + H(+). The enzyme catalyses L-threonyl-[protein] + ATP = O-phospho-L-threonyl-[protein] + ADP + H(+). Its activity is regulated as follows. Activated by calcium. Autophosphorylation may play an important role in the regulation of the kinase activity. In terms of biological role, regulates the production of reactive oxygen species (ROS) by NADPH oxidase. The protein is Calcium-dependent protein kinase 4 (CPK4) of Solanum tuberosum (Potato).